The sequence spans 192 residues: Potassium-transporting ATPase KdpC subunit (192 aa).

A helical membrane pass occupies residues 7-27 (PLIVLFVVLAALTGLAYPAVM).

Belongs to the KdpC family. In terms of assembly, the system is composed of three essential subunits: KdpA, KdpB and KdpC.

The protein localises to the cell inner membrane. Part of the high-affinity ATP-driven potassium transport (or Kdp) system, which catalyzes the hydrolysis of ATP coupled with the electrogenic transport of potassium into the cytoplasm. This subunit acts as a catalytic chaperone that increases the ATP-binding affinity of the ATP-hydrolyzing subunit KdpB by the formation of a transient KdpB/KdpC/ATP ternary complex. This Paraburkholderia xenovorans (strain LB400) protein is Potassium-transporting ATPase KdpC subunit.